We begin with the raw amino-acid sequence, 398 residues long: ATP-dependent RNA helicase eIF4A (398 aa).

The short motif at 25 to 53 is the Q motif element; the sequence is DSFDSMDLKPELLRGIYAYGFERPSAIQQ. Positions 56–226 constitute a Helicase ATP-binding domain; sequence IMPIIKGSDV…TKFMRDPVRI (171 aa). 69-76 provides a ligand contact to ATP; it reads AQSGTGKT. The DEAD box motif lies at 174 to 177; the sequence is DEAD. The region spanning 237 to 398 is the Helicase C-terminal domain; that stretch reads GIKQFYIAVE…EMPMNVADLI (162 aa).

It belongs to the DEAD box helicase family. eIF4A subfamily. In terms of assembly, component of the eIF4F complex, which composition varies with external and internal environmental conditions. It is composed of at least eIF4A, eIF4E and eIF4G.

It is found in the cytoplasm. It catalyses the reaction ATP + H2O = ADP + phosphate + H(+). Its function is as follows. ATP-dependent RNA helicase which is a subunit of the eIF4F complex involved in cap recognition and is required for mRNA binding to ribosome. In the current model of translation initiation, eIF4A unwinds RNA secondary structures in the 5'-UTR of mRNAs which is necessary to allow efficient binding of the small ribosomal subunit, and subsequent scanning for the initiator codon. In Aspergillus clavatus (strain ATCC 1007 / CBS 513.65 / DSM 816 / NCTC 3887 / NRRL 1 / QM 1276 / 107), this protein is ATP-dependent RNA helicase eIF4A (tif1).